Here is an 89-residue protein sequence, read N- to C-terminus: Small ribosomal subunit protein uS15 (89 aa).

The span at 1-21 shows a compositional bias: basic and acidic residues; the sequence is MSVDAETKTKIIKDNARDKND. The disordered stretch occupies residues 1-26; that stretch reads MSVDAETKTKIIKDNARDKNDTGSPE.

This sequence belongs to the universal ribosomal protein uS15 family. In terms of assembly, part of the 30S ribosomal subunit. Forms a bridge to the 50S subunit in the 70S ribosome, contacting the 23S rRNA.

One of the primary rRNA binding proteins, it binds directly to 16S rRNA where it helps nucleate assembly of the platform of the 30S subunit by binding and bridging several RNA helices of the 16S rRNA. Its function is as follows. Forms an intersubunit bridge (bridge B4) with the 23S rRNA of the 50S subunit in the ribosome. This is Small ribosomal subunit protein uS15 from Erythrobacter litoralis (strain HTCC2594).